Consider the following 123-residue polypeptide: Small ribosomal subunit protein uS13 (123 aa).

A disordered region spans residues 97–123 (PVRGQRTHTNAKTRKGRSKLPVAAKKK).

The protein belongs to the universal ribosomal protein uS13 family. In terms of assembly, part of the 30S ribosomal subunit. Forms a loose heterodimer with protein S19. Forms two bridges to the 50S subunit in the 70S ribosome.

Located at the top of the head of the 30S subunit, it contacts several helices of the 16S rRNA. In the 70S ribosome it contacts the 23S rRNA (bridge B1a) and protein L5 of the 50S subunit (bridge B1b), connecting the 2 subunits; these bridges are implicated in subunit movement. Contacts the tRNAs in the A and P-sites. This chain is Small ribosomal subunit protein uS13, found in Ehrlichia canis (strain Jake).